Here is a 54-residue protein sequence, read N- to C-terminus: UPF0391 membrane protein Bpro_0879 (54 aa).

The next 2 helical transmembrane spans lie at 6-26 (VVFL…IAAG) and 30-50 (IAKI…VMGL).

It belongs to the UPF0391 family.

Its subcellular location is the cell membrane. In Polaromonas sp. (strain JS666 / ATCC BAA-500), this protein is UPF0391 membrane protein Bpro_0879.